A 227-amino-acid polypeptide reads, in one-letter code: Leucyl/phenylalanyl-tRNA--protein transferase (227 aa).

Belongs to the L/F-transferase family.

The protein localises to the cytoplasm. It carries out the reaction N-terminal L-lysyl-[protein] + L-leucyl-tRNA(Leu) = N-terminal L-leucyl-L-lysyl-[protein] + tRNA(Leu) + H(+). The enzyme catalyses N-terminal L-arginyl-[protein] + L-leucyl-tRNA(Leu) = N-terminal L-leucyl-L-arginyl-[protein] + tRNA(Leu) + H(+). The catalysed reaction is L-phenylalanyl-tRNA(Phe) + an N-terminal L-alpha-aminoacyl-[protein] = an N-terminal L-phenylalanyl-L-alpha-aminoacyl-[protein] + tRNA(Phe). Functionally, functions in the N-end rule pathway of protein degradation where it conjugates Leu, Phe and, less efficiently, Met from aminoacyl-tRNAs to the N-termini of proteins containing an N-terminal arginine or lysine. The polypeptide is Leucyl/phenylalanyl-tRNA--protein transferase (Afipia carboxidovorans (strain ATCC 49405 / DSM 1227 / KCTC 32145 / OM5) (Oligotropha carboxidovorans)).